An 809-amino-acid polypeptide reads, in one-letter code: Sucrose synthase 2 (809 aa).

The GT-B glycosyltransferase stretch occupies residues 278–756 (MVFNVVILSP…GLQRIYERYT (479 aa)).

The protein belongs to the glycosyltransferase 1 family. Plant sucrose synthase subfamily.

The enzyme catalyses an NDP-alpha-D-glucose + D-fructose = a ribonucleoside 5'-diphosphate + sucrose + H(+). Sucrose-cleaving enzyme that provides UDP-glucose and fructose for various metabolic pathways. The protein is Sucrose synthase 2 (SUS2) of Pisum sativum (Garden pea).